The primary structure comprises 1553 residues: Mediator of RNA polymerase II transcription subunit 14 (1553 aa).

2 short sequence motifs (LXXLL motif) span residues leucine 55 to leucine 59 and leucine 472 to leucine 476. The residue at position 615 (serine 615) is a Phosphoserine. Disordered regions lie at residues phenylalanine 699 to glycine 723, alanine 1006 to proline 1199, and glycine 1513 to glutamine 1553. At serine 1015 the chain carries Phosphoserine. Low complexity-rich tracts occupy residues glycine 1024 to proline 1039 and proline 1065 to alanine 1080. Residues glycine 1081–glycine 1090 are compositionally biased toward gly residues. The span at proline 1099–serine 1108 shows a compositional bias: pro residues. Polar residues predominate over residues glycine 1131 to tryptophan 1155. Residues proline 1159–glycine 1169 show a composition bias toward pro residues. Positions threonine 1177–arginine 1193 are enriched in gly residues. Residues glycine 1515–glutamine 1534 are compositionally biased toward low complexity.

The protein belongs to the Mediator complex subunit 14 family. As to quaternary structure, component of the Mediator complex, which may include CDK8, MED4, MED6, MED11, MED14, MED17, MED18, MED20, MED21, MED22, MED27, MED28, MED30 and MED31.

Its subcellular location is the nucleus. In terms of biological role, component of the Mediator complex, a coactivator involved in the regulated transcription of nearly all RNA polymerase II-dependent genes. Mediator functions as a bridge to convey information from gene-specific regulatory proteins to the basal RNA polymerase II transcription machinery. Mediator is recruited to promoters by direct interactions with regulatory proteins and serves as a scaffold for the assembly of a functional pre-initiation complex with RNA polymerase II and the general transcription factors. Required for activated transcription of the MtnA, MtnB and MtnD genes. The protein is Mediator of RNA polymerase II transcription subunit 14 (MED14) of Drosophila melanogaster (Fruit fly).